The following is a 342-amino-acid chain: Serpentine receptor class delta-33 (342 aa).

Helical transmembrane passes span 26 to 46 (IFVI…LLLL), 62 to 82 (IFLA…VTSM), 112 to 132 (YVGI…SMIY), 148 to 168 (IILC…CSNI), 205 to 225 (LIIL…VMYW), 261 to 281 (IIPL…QLGF), and 287 to 307 (YSYF…VVTI).

This sequence belongs to the nematode receptor-like protein srd family.

It localises to the membrane. This Caenorhabditis elegans protein is Serpentine receptor class delta-33 (srd-33).